The sequence spans 134 residues: ATP synthase epsilon chain, chloroplastic (134 aa).

Belongs to the ATPase epsilon chain family. As to quaternary structure, F-type ATPases have 2 components, CF(1) - the catalytic core - and CF(0) - the membrane proton channel. CF(1) has five subunits: alpha(3), beta(3), gamma(1), delta(1), epsilon(1). CF(0) has three main subunits: a, b and c.

The protein resides in the plastid. It localises to the chloroplast thylakoid membrane. In terms of biological role, produces ATP from ADP in the presence of a proton gradient across the membrane. This chain is ATP synthase epsilon chain, chloroplastic, found in Pyropia yezoensis (Susabi-nori).